Here is a 436-residue protein sequence, read N- to C-terminus: Serine--tRNA ligase (436 aa).

239-241 (TAE) is an L-serine binding site. 270–272 (RLE) serves as a coordination point for ATP. L-serine is bound at residue E293. 357-360 (EISS) contacts ATP. Residue S393 coordinates L-serine.

The protein belongs to the class-II aminoacyl-tRNA synthetase family. Type-1 seryl-tRNA synthetase subfamily. Homodimer. The tRNA molecule binds across the dimer.

The protein localises to the cytoplasm. It carries out the reaction tRNA(Ser) + L-serine + ATP = L-seryl-tRNA(Ser) + AMP + diphosphate + H(+). The enzyme catalyses tRNA(Sec) + L-serine + ATP = L-seryl-tRNA(Sec) + AMP + diphosphate + H(+). Its pathway is aminoacyl-tRNA biosynthesis; selenocysteinyl-tRNA(Sec) biosynthesis; L-seryl-tRNA(Sec) from L-serine and tRNA(Sec): step 1/1. Functionally, catalyzes the attachment of serine to tRNA(Ser). Is also able to aminoacylate tRNA(Sec) with serine, to form the misacylated tRNA L-seryl-tRNA(Sec), which will be further converted into selenocysteinyl-tRNA(Sec). The sequence is that of Serine--tRNA ligase from Blochmanniella floridana.